Consider the following 198-residue polypeptide: Holliday junction branch migration complex subunit RuvA (198 aa).

The tract at residues 1–63 is domain I; that stretch reads MYDYIKGQLT…EDAHLLFGFH (63 aa). The segment at 64 to 142 is domain II; that stretch reads TEDEKDVFLK…EAPQETGNTK (79 aa). Positions 143 to 147 are flexible linker; that stretch reads ARSNK. The tract at residues 148–198 is domain III; that stretch reads AGNTQLDEAIEALLALGYKATELKKIRAFFEGTSETAEQYIKSALKLLMKG.

Belongs to the RuvA family. As to quaternary structure, homotetramer. Forms an RuvA(8)-RuvB(12)-Holliday junction (HJ) complex. HJ DNA is sandwiched between 2 RuvA tetramers; dsDNA enters through RuvA and exits via RuvB. An RuvB hexamer assembles on each DNA strand where it exits the tetramer. Each RuvB hexamer is contacted by two RuvA subunits (via domain III) on 2 adjacent RuvB subunits; this complex drives branch migration. In the full resolvosome a probable DNA-RuvA(4)-RuvB(12)-RuvC(2) complex forms which resolves the HJ.

The protein resides in the cytoplasm. The RuvA-RuvB-RuvC complex processes Holliday junction (HJ) DNA during genetic recombination and DNA repair, while the RuvA-RuvB complex plays an important role in the rescue of blocked DNA replication forks via replication fork reversal (RFR). RuvA specifically binds to HJ cruciform DNA, conferring on it an open structure. The RuvB hexamer acts as an ATP-dependent pump, pulling dsDNA into and through the RuvAB complex. HJ branch migration allows RuvC to scan DNA until it finds its consensus sequence, where it cleaves and resolves the cruciform DNA. This chain is Holliday junction branch migration complex subunit RuvA, found in Streptococcus pyogenes serotype M12 (strain MGAS2096).